The sequence spans 201 residues: 3-isopropylmalate dehydratase small subunit (201 aa).

This sequence belongs to the LeuD family. LeuD type 1 subfamily. Heterodimer of LeuC and LeuD.

It carries out the reaction (2R,3S)-3-isopropylmalate = (2S)-2-isopropylmalate. The protein operates within amino-acid biosynthesis; L-leucine biosynthesis; L-leucine from 3-methyl-2-oxobutanoate: step 2/4. In terms of biological role, catalyzes the isomerization between 2-isopropylmalate and 3-isopropylmalate, via the formation of 2-isopropylmaleate. In Rhodopseudomonas palustris (strain ATCC BAA-98 / CGA009), this protein is 3-isopropylmalate dehydratase small subunit.